Consider the following 223-residue polypeptide: Sugar fermentation stimulation protein homolog (223 aa).

Belongs to the SfsA family.

In Thermosipho melanesiensis (strain DSM 12029 / CIP 104789 / BI429), this protein is Sugar fermentation stimulation protein homolog.